We begin with the raw amino-acid sequence, 262 residues long: MARHLLLFDIGNTNVKVGIATEGTVLTSYALPTDGTQTGDGFGLALLDIMRHAGLGADDIDACVGSSVVPSLDPLLRHACERFLWRPLQLAHVDLPVPLENRYERPTEVGADRLVAAFAARRLYPDARALVSVDFGTATTFDCVDGDAYLGGLICPGVLSSAGALSSRTAKLPRVSLEVSEDMPVVGRSTTTSLNHGFIFGFAALAEGVTARLRKVLPEPLEVVATGGFARAVARVSDCFDHVRPDLLLEGLRLLYLESEQR.

9–16 (DIGNTNVK) contacts ATP. Substrate contacts are provided by residues Y103 and 110–113 (GADR). Residue D112 is the Proton acceptor of the active site. D134 is a K(+) binding site. ATP is bound at residue T137. Position 190 (T190) interacts with substrate.

It belongs to the type III pantothenate kinase family. As to quaternary structure, homodimer. The cofactor is NH4(+). K(+) is required as a cofactor.

Its subcellular location is the cytoplasm. The catalysed reaction is (R)-pantothenate + ATP = (R)-4'-phosphopantothenate + ADP + H(+). It functions in the pathway cofactor biosynthesis; coenzyme A biosynthesis; CoA from (R)-pantothenate: step 1/5. Catalyzes the phosphorylation of pantothenate (Pan), the first step in CoA biosynthesis. This Nitratidesulfovibrio vulgaris (strain ATCC 29579 / DSM 644 / CCUG 34227 / NCIMB 8303 / VKM B-1760 / Hildenborough) (Desulfovibrio vulgaris) protein is Type III pantothenate kinase.